The sequence spans 968 residues: C-1-tetrahydrofolate synthase, cytoplasmic (968 aa).

The methylenetetrahydrofolate dehydrogenase and cyclohydrolase stretch occupies residues 1–338; that stretch reads MSAQYQRFLK…ERLAKSQWAL (338 aa). Residues 86 to 90 and 133 to 135 each bind substrate; these read YIRMK and VQM. Residues 205-207 and serine 230 contribute to the NADP(+) site; that span reads GRS. Residue 305–309 coordinates substrate; sequence PGGVG. The formyltetrahydrofolate synthetase stretch occupies residues 339-968; sequence QTLPLKPQRP…TETGEIEGLF (630 aa). An ATP-binding site is contributed by 413–420; it reads TPLGEGKT.

This sequence in the N-terminal section; belongs to the tetrahydrofolate dehydrogenase/cyclohydrolase family. The protein in the C-terminal section; belongs to the formate--tetrahydrofolate ligase family. In terms of assembly, homodimer. As to expression, present in all tissues.

The protein resides in the cytoplasm. The enzyme catalyses (6R)-5,10-methylene-5,6,7,8-tetrahydrofolate + NADP(+) = (6R)-5,10-methenyltetrahydrofolate + NADPH. The catalysed reaction is (6R)-5,10-methenyltetrahydrofolate + H2O = (6R)-10-formyltetrahydrofolate + H(+). It catalyses the reaction (6S)-5,6,7,8-tetrahydrofolate + formate + ATP = (6R)-10-formyltetrahydrofolate + ADP + phosphate. Its pathway is one-carbon metabolism; tetrahydrofolate interconversion. This chain is C-1-tetrahydrofolate synthase, cytoplasmic (pug), found in Drosophila melanogaster (Fruit fly).